We begin with the raw amino-acid sequence, 360 residues long: MNCESLLTALDVSTLLSTLSSPEKEHRRKRRRGEVANPSNTLDALVARKADDQPFEKRYLSEQEAIEGPDDEIEMKKMELDPDVSTRTCSTCGYQGKWVSEMIRHKRVHTSERPFKCRYCSRTSKWKADLIRHVAKTHGIRVVSKYSRSKVFDATNSSMDSSCSSDSDRCIISEKRTVFYRCQLCSFEDERVSVLNSHVSHLHNTSPCVCRCGAKFEDVQGALAHSNGPCSHVDMIYNVMPTYEKASPLSPCRSESSSDSGIQTDPEEEASIITSSLPTPQLGSSPLLLSPTLPVTPSFLPDIQSALLSLQPNPLMSLYLASLLQSSLLNSPTIPTSFPQIIPTTILTPSQQDEMVDVEM.

The tract at residues 19-41 (LSSPEKEHRRKRRRGEVANPSNT) is disordered. 3 C2H2-type zinc fingers span residues 87–109 (RTCS…KRVH), 115–138 (FKCR…AKTH), and 180–203 (YRCQ…SHLH). Low complexity predominate over residues 248 to 260 (PLSPCRSESSSDS). Residues 248–272 (PLSPCRSESSSDSGIQTDPEEEASI) are disordered.

As to expression, expressed in pharyngeal epithelium/arcade, which connects the pharynx to the mouth.

Its function is as follows. Transcription factor. Represses gene expression, probably via binding to DNA consensus sequence 5'-[AT][CT]TTCC[AC][AG]-3' in promoter regions. May play a role in pharynx morphogenesis. This is Zinc finger protein ztf-2 from Caenorhabditis elegans.